A 1378-amino-acid polypeptide reads, in one-letter code: MSLERELRQLSKAKAKAQRAGQRREEAALCHQLGELLAGHGRYAEALEQHWQELQLRERADDPLGCAVAHRKIGERLAEMEDYPAALQHQHQYLELAHSLRNHTELQRAWATIGRTHLDIYDHCQSRDALLQAQAAFEKSLAIVDEELEGTLAQGELNEMRTRLYLNLGLTFESLQQTALCNDYFRKSIFLAEQNHLYEDLFRARYNLGTIHWRAGQHSQAMRCLEGARECAHTMRKRFMESECCVVIAQVLQDLGDFLAAKRALKKAYRLGSQKPVQRAAICQNLQHVLAVVRLQQQLEEAEGRDPQGAMVICEQLGDLFSKAGDFPRAAEAYQKQLRFAELLDRPGAERAIIHVSLATTLGDMKDHHGAVRHYEEELRLRSGNVLEEAKTWLNIALSREEAGDAYELLAPCFQKALSCAQQAQRPQLQRQVLQHLHTVQLRLQPQEAPETETRLRELSVAEDEDEEEEAEEAAATAESEALEAGEVELSEGEDDTDGLTPQLEEDEELQGHLGRRKGSKWNRRNDMGETLLHRACIEGQLRRVQDLVRQGHPLNPRDYCGWTPLHEACNYGHLEIVRFLLDHGAAVDDPGGQGCEGITPLHDALNCGHFEVAELLLERGASVTLRTRKGLSPLETLQQWVKLYRRDLDLETRQKARAMEMLLQAAASGQDPHSSQAFHTPSSLLFDPETSPPLSPCPEPPSNSTRLPEASQAHVRVSPGQAAPAMARPRRSRHGPASSSSSSEGEDSAGPARPSQKRPRCSATAQRVAAWTPGPASNREAATASTSRAAYQAAIRGVGSAQSRLGPGPPRGHSKALAPQAALIPEEECLAGDWLELDMPLTRSRRPRPRGTGDNRRPSSTSGSDSEESRPRARAKQVRLTCMQSCSAPVNAGPSSLASEPPGSPSTPRVSEPSGDSSAAGQPLGPAPPPPIRVRVQVQDHLFLIPVPHSSDTHSVAWLAEQAAQRYYQTCGLLPRLTLRKEGALLAPQDLIPDVLQSNDEVLAEVTSWDLPPLTDRYRRACQSLGQGEHQQVLQAVELQGLGLSFSACSLALDQAQLTPLLRALKLHTALRELRLAGNRLGDKCVAELVAALGTMPSLALLDLSSNHLGPEGLRQLAMGLPGQATLQSLEELDLSMNPLGDGCGQSLASLLHACPLLSTLRLQACGFGPSFFLSHQTALGSAFQDAEHLKTLSLSYNALGAPALARTLQSLPAGTLLHLELSSVAAGKGDSDLMEPVFRYLAKEGCALAHLTLSANHLGDKAVRDLCRCLSLCPSLISLDLSANPEISCASLEELLSTLQKRPQGLSFLGLSGCAVQGPLGLGLWDKIAAQLRELQLCSRRLCAEDRDALRQLQPSRPGPGECTLDHGSKLFFRRL.

TPR repeat units lie at residues 27 to 60 (AALC…RERA), 67 to 100 (AVAH…AHSL), 107 to 147 (QRAW…VDEE), 162 to 195 (TRLY…AEQN), 202 to 235 (FRAR…AHTM), 242 to 275 (SECC…GSQK), 311 to 344 (MVIC…AELL), and 352 to 385 (AIIH…RSGN). The segment at 475–524 (AATAESEALEAGEVELSEGEDDTDGLTPQLEEDEELQGHLGRRKGSKWNR) is disordered. The span at 481–509 (EALEAGEVELSEGEDDTDGLTPQLEEDEE) shows a compositional bias: acidic residues. Over residues 514 to 523 (LGRRKGSKWN) the composition is skewed to basic residues. ANK repeat units follow at residues 528–557 (MGET…PLNP), 561–590 (CGWT…AVDD), and 597–626 (EGIT…SVTL). The tract at residues 667–789 (AASGQDPHSS…REAATASTSR (123 aa)) is disordered. A compositionally biased stretch (polar residues) spans 672–684 (DPHSSQAFHTPSS). A compositionally biased stretch (pro residues) spans 691 to 702 (TSPPLSPCPEPP). Position 719 is a phosphoserine (Ser-719). Composition is skewed to low complexity over residues 736–753 (GPAS…AGPA) and 777–789 (ASNR…STSR). An Omega-N-methylarginine modification is found at Arg-797. The tract at residues 842 to 933 (LTRSRRPRPR…PLGPAPPPPI (92 aa)) is disordered. Composition is skewed to polar residues over residues 883–899 (CMQS…SSLA) and 907–918 (STPRVSEPSGDS). LRR repeat units follow at residues 1069–1093 (HTAL…LVAA), 1097–1122 (MPSL…AMGL), 1128–1151 (LQSL…SLAS), 1188–1212 (AEHL…TLQS), 1247–1270 (GCAL…DLCR), 1275–1300 (CPSL…LLST), and 1331–1354 (AAQL…ALRQ).

The protein belongs to the Tonsoku family. As to quaternary structure, component of the MMS22L-TONSL complex, a complex at least composed of MMS22L and TONSL/NFKBIL2. Interacts with the MCM complex, the FACT complex and the RPA complex. Interacts with MCM5; the interaction is direct. Binds histones, with a strong preference for histone H3.1 (histones H3.1 and H3-4/H3.1t). Interacts (via ANK repeats) with histone H4; specifically binds histone H4 lacking methylation at 'Lys-20' (H4K20me0). May interact with DNAJC9; the interaction seems to be histone-dependent. As to expression, expressed in heart, skeletal muscle and tracheal epithelial cells.

Its subcellular location is the nucleus. It localises to the chromosome. The protein localises to the cytoplasm. Component of the MMS22L-TONSL complex, a complex that promotes homologous recombination-mediated repair of double-strand breaks (DSBs) at stalled or collapsed replication forks. The MMS22L-TONSL complex is required to maintain genome integrity during DNA replication. It mediates the assembly of RAD51 filaments on single-stranded DNA (ssDNA): the MMS22L-TONSL complex is recruited to DSBs following histone replacement by histone chaperones and eviction of the replication protein A complex (RPA/RP-A) from DSBs. Following recruitment to DSBs, the TONSL-MMS22L complex promotes recruitment of RAD51 filaments and subsequent homologous recombination. Within the complex, TONSL acts as a histone reader, which recognizes and binds newly synthesized histones following their replacement by histone chaperones. Specifically binds histone H4 lacking methylation at 'Lys-20' (H4K20me0) and histone H3.1. This is Tonsoku-like protein from Homo sapiens (Human).